A 745-amino-acid polypeptide reads, in one-letter code: Elongation factor G, mitochondrial (745 aa).

One can recognise a tr-type G domain in the interval 40 to 317; it reads ERIRNIGISA…AVLDYLPNPG (278 aa). GTP is bound by residues 49 to 56, 116 to 120, and 170 to 173; these read AHIDSGKT, DTPGH, and NKLD.

It belongs to the TRAFAC class translation factor GTPase superfamily. Classic translation factor GTPase family. EF-G/EF-2 subfamily.

The protein resides in the mitochondrion. Its pathway is protein biosynthesis; polypeptide chain elongation. Mitochondrial GTPase that catalyzes the GTP-dependent ribosomal translocation step during translation elongation. During this step, the ribosome changes from the pre-translocational (PRE) to the post-translocational (POST) state as the newly formed A-site-bound peptidyl-tRNA and P-site-bound deacylated tRNA move to the P and E sites, respectively. Catalyzes the coordinated movement of the two tRNA molecules, the mRNA and conformational changes in the ribosome. Essential during development as it acts as a retrograde signal from mitochondria to the nucleus to slow down cell proliferation if mitochondrial energy output is low. In Drosophila sechellia (Fruit fly), this protein is Elongation factor G, mitochondrial.